The primary structure comprises 410 residues: NIPA-like protein 3 (410 aa).

The interval 1–24 (MDGAHSAGLQLQPLPPTSGATSTS) is disordered. 9 consecutive transmembrane segments (helical) span residues 37 to 57 (NLIG…ALNL), 80 to 100 (WWLG…SYAF), 105 to 125 (LIVP…IIFI), 139 to 159 (VLSF…VTFA), 175 to 195 (LVSW…CLLL), 206 to 226 (IVVI…TVKA), 244 to 264 (PIFY…ATFL), 275 to 295 (LIAS…GAIF), and 304 to 324 (ALHI…VFLI). Ser-376 is subject to Phosphoserine. Residues 389-410 (EEHSSRSTPGVPYRVLEHTKKE) are disordered.

This sequence belongs to the NIPA family.

It is found in the membrane. This is NIPA-like protein 3 (Nipal3) from Mus musculus (Mouse).